A 170-amino-acid polypeptide reads, in one-letter code: Cathelicidin antimicrobial peptide (170 aa).

Residues 1-30 (MKTQRDGHSLGWWSLVLLLLGLVMPLAIIA) form the signal peptide. Residues 31 to 131 (QVLSYKEAVL…DISCDKDNKR (101 aa)) constitute a propeptide, cathelin-like domain (CLD). 2 disulfides stabilise this stretch: Cys-86–Cys-97 and Cys-108–Cys-125. Residues 150–162 (SKRIVQRIKDFLR) form an active core region.

This sequence belongs to the cathelicidin family. In terms of assembly, monomer, homodimer or homotrimer (in vitro). Oligomerizes as tetra- or hexamer in solution (in vitro). In terms of processing, proteolytically cleaved by proteinase PRTN3 into antibacterial peptide LL-37. Proteolytically cleaved by cathepsin CTSG and neutrophil elastase ELANE. Resistant to proteolytic degradation in solution, and when bound to both zwitterionic (mimicking mammalian membranes) and negatively charged membranes (mimicking bacterial membranes). Post-translationally, after secretion onto the skin surface, the CAMP gene product is processed by a serine protease-dependent mechanism into multiple novel antimicrobial peptides distinct from and shorter than cathelicidin LL-37. These peptides show enhanced antimicrobial action, acquiring the ability to kill skin pathogens such as S.aureus, E.coli and C.albicans. These peptides have lost the ability to stimulate CXCL8/IL8 release from keratinocytes. The peptides act synergistically, killing bacteria at lower concentrations when present together, and maintain activity at increased salt condition.

It is found in the secreted. Its subcellular location is the vesicle. Functionally, antimicrobial protein that is an integral component of the innate immune system. Binds to bacterial lipopolysaccharides (LPS). Acts via neutrophil N-formyl peptide receptors to enhance the release of CXCL2. Postsecretory processing generates multiple cathelicidin antimicrobial peptides with various lengths which act as a topical antimicrobial defense in sweat on skin. The unprocessed precursor form, cathelicidin antimicrobial peptide, inhibits the growth of Gram-negative E.coli and E.aerogenes with efficiencies comparable to that of the mature peptide LL-37 (in vitro). Its function is as follows. Antimicrobial peptide that is an integral component of the innate immune system. Binds to bacterial lipopolysaccharides (LPS). Causes membrane permeabilization by forming transmembrane pores (in vitro). Causes lysis of E.coli. Exhibits antimicrobial activity against Gram-negative bacteria such as P.aeruginosa, S.typhimurium, E.aerogenes, E.coli and P.syringae, Gram-positive bacteria such as L.monocytogenes, S.epidermidis, S.pyogenes and S.aureus, as well as vancomycin-resistant enterococci (in vitro). Exhibits antimicrobial activity against methicillin-resistant S.aureus, P.mirabilis, and C.albicans in low-salt media, but not in media containing 100 mM NaCl (in vitro). Forms chiral supramolecular assemblies with quinolone signal (PQS) molecules of P.aeruginosa, which may lead to interference of bacterial quorum signaling and perturbance of bacterial biofilm formation. May form supramolecular fiber-like assemblies on bacterial membranes. Induces cytokine and chemokine producation as well as TNF/TNFA and CSF2/GMCSF production in normal human keratinocytes. Exhibits hemolytic activity against red blood cells. In terms of biological role, exhibits antimicrobial activity against E.coli and B.megaterium (in vitro). The polypeptide is Cathelicidin antimicrobial peptide (Gorilla gorilla gorilla (Western lowland gorilla)).